We begin with the raw amino-acid sequence, 324 residues long: MALTAKVKDELARLPVTKTCCRKAEVAATLRFAGGLHLVGGRIVVEAELDTGAAARRLRTALAELYGQHAELAVIAPGGLHRGNRYVVRVSRDGETLAKQTGLLDGRGRPVRGLPSQIVSGGVCDAAAAWRGAFLAHGSLTEPGRGCTLEVSCPGPESALALVGAARRLGVQAKSREVRGVERVVVRDGDAIGVLLTRLGAHDSVLAWEEYRVRREVRATANRLANFDDANVRRSARAAVTAAAKVKRALEILGDSVPEHLAAAGTLRMVHPQVSLEELGALADPPLTKDAIAGRIRRLIAMADRRADELGIPGTEAALVGELP.

The H-T-H motif DNA-binding region spans 275–308 (SLEELGALADPPLTKDAIAGRIRRLIAMADRRAD).

Belongs to the WhiA family.

Functionally, involved in cell division and chromosome segregation. This is Probable cell division protein WhiA from Acidothermus cellulolyticus (strain ATCC 43068 / DSM 8971 / 11B).